The chain runs to 327 residues: Serine/threonine-protein phosphatase alpha-1 isoform (327 aa).

Residues aspartate 62, histidine 64, aspartate 90, and asparagine 122 each coordinate Mn(2+). Catalysis depends on histidine 123, which acts as the Proton donor. Mn(2+)-binding residues include histidine 171 and histidine 246. A disordered region spans residues 308–327; the sequence is GSSGRPLTPPRGANNKNKKK. Threonine 315 carries the post-translational modification Phosphothreonine.

This sequence belongs to the PPP phosphatase family. PP-1 subfamily. As to quaternary structure, interacts with Nop17l. Mn(2+) is required as a cofactor.

The enzyme catalyses O-phospho-L-seryl-[protein] + H2O = L-seryl-[protein] + phosphate. It catalyses the reaction O-phospho-L-threonyl-[protein] + H2O = L-threonyl-[protein] + phosphate. The chain is Serine/threonine-protein phosphatase alpha-1 isoform (Pp1alpha-96A) from Drosophila melanogaster (Fruit fly).